The primary structure comprises 635 residues: Probable Xaa-Pro aminopeptidase P (635 aa).

Positions 432, 443, 541, and 555 each coordinate Mn(2+).

Belongs to the peptidase M24B family. The cofactor is Mn(2+).

The enzyme catalyses Release of any N-terminal amino acid, including proline, that is linked to proline, even from a dipeptide or tripeptide.. Functionally, catalyzes the removal of a penultimate prolyl residue from the N-termini of peptides. The protein is Probable Xaa-Pro aminopeptidase P (AMPP) of Arthroderma gypseum (strain ATCC MYA-4604 / CBS 118893) (Microsporum gypseum).